The primary structure comprises 22 residues: Conotoxin MIIIJ (22 aa).

At Gln1 the chain carries Pyrrolidone carboxylic acid. Intrachain disulfides connect Cys3–Cys21, Cys4–Cys19, and Cys9–Cys22.

It belongs to the conotoxin M superfamily. As to expression, expressed by the venom duct.

The protein resides in the secreted. Its function is as follows. Probable competitive antagonist of fish muscle acetylcholine receptor. Inhibits postsynaptic nicotinic acetylcholine receptors (nAChRs) from fish (zebrafish and goldfish) and frogs (IC(50)=0.1 uM). Protects these receptors from block by alpha-bungarotoxin and alpha-conotoxin EI. Does not block nAChRs at the neuromuscular junction of Rana pipiens. Shows a weak inhibition on mammalian adult and fetal muscle nAChRs (alpha-1-beta-1-delta-epsilon/CHRNA1-CHRNB1-CHRND-CHRNE and alpha-1 beta-1 gamma delta/CHRNA1-CHRNB1-CHRNG-CHRND) (IC(50)=3-45 uM). In vivo, induces paralysis in goldfish (Carassius auratus) but not mice. This chain is Conotoxin MIIIJ, found in Conus magus (Magical cone).